A 165-amino-acid chain; its full sequence is Natriuretic peptide Na-NP (165 aa).

The first 25 residues, 1-25 (MVGLSRLAGGGLLLVLALLPLALDG), serve as a signal peptide directing secretion. Residues 26–83 (KPAPEALHKPPTGLRTSLAALRILGYLRPDSKQSRAARDRMLHPEQQVGGGGDSRPLQ) constitute a propeptide that is removed on maturation. Over residues 56 to 68 (SKQSRAARDRMLH) the composition is skewed to basic and acidic residues. 2 disordered regions span residues 56 to 100 (SKQS…QKID) and 135 to 165 (PDSK…SRVI). A disulfide bridge links Cys94 with Cys110. Residues 129-165 (ILEYLRPDSKRSRATRDRMLHPEQQVGGGGGGGSRVI) constitute a propeptide that is removed on maturation. Residues 135–149 (PDSKRSRATRDRMLH) are compositionally biased toward basic and acidic residues. A compositionally biased stretch (gly residues) spans 154-165 (VGGGGGGGSRVI).

It belongs to the natriuretic peptide family. As to expression, expressed by the venom gland.

The protein resides in the secreted. Functionally, natriuretic peptide that dose-dependently induces the rapid relaxation of rat aortic strips phenylephrine-precontracted. Acts by stimulating cGMP production in a dose-dependent manner (by probably activating NPR1 and/or NPR2). May also show potent hypotensive effects. The chain is Natriuretic peptide Na-NP from Naja atra (Chinese cobra).